Consider the following 118-residue polypeptide: Large ribosomal subunit protein uL22 (118 aa).

This sequence belongs to the universal ribosomal protein uL22 family. As to quaternary structure, part of the 50S ribosomal subunit.

Functionally, this protein binds specifically to 23S rRNA; its binding is stimulated by other ribosomal proteins, e.g. L4, L17, and L20. It is important during the early stages of 50S assembly. It makes multiple contacts with different domains of the 23S rRNA in the assembled 50S subunit and ribosome. Its function is as follows. The globular domain of the protein is located near the polypeptide exit tunnel on the outside of the subunit, while an extended beta-hairpin is found that lines the wall of the exit tunnel in the center of the 70S ribosome. The chain is Large ribosomal subunit protein uL22 from Treponema denticola (strain ATCC 35405 / DSM 14222 / CIP 103919 / JCM 8153 / KCTC 15104).